A 496-amino-acid polypeptide reads, in one-letter code: Aspartyl/glutamyl-tRNA(Asn/Gln) amidotransferase subunit B (496 aa).

The protein belongs to the GatB/GatE family. GatB subfamily. Heterotrimer of A, B and C subunits.

The enzyme catalyses L-glutamyl-tRNA(Gln) + L-glutamine + ATP + H2O = L-glutaminyl-tRNA(Gln) + L-glutamate + ADP + phosphate + H(+). It catalyses the reaction L-aspartyl-tRNA(Asn) + L-glutamine + ATP + H2O = L-asparaginyl-tRNA(Asn) + L-glutamate + ADP + phosphate + 2 H(+). In terms of biological role, allows the formation of correctly charged Asn-tRNA(Asn) or Gln-tRNA(Gln) through the transamidation of misacylated Asp-tRNA(Asn) or Glu-tRNA(Gln) in organisms which lack either or both of asparaginyl-tRNA or glutaminyl-tRNA synthetases. The reaction takes place in the presence of glutamine and ATP through an activated phospho-Asp-tRNA(Asn) or phospho-Glu-tRNA(Gln). The protein is Aspartyl/glutamyl-tRNA(Asn/Gln) amidotransferase subunit B of Prochlorococcus marinus (strain MIT 9303).